A 192-amino-acid polypeptide reads, in one-letter code: MSVFRRSVQCVGVLPSILAQRSSLLARPANLQFLKTNSSKFVPQVTANVSRRMYHKNVLDHYNNPRNVGTLPKGDPDVGIGLVGAPACGDVMRLAIRVNKDGVIEDVKFKTFGCGSAIASSSYVTTMVKGMTLEEASKIKNTQIAKELCLPPVKLHCSMLAEDAIKSAVKHYRSKQLTPVGTTAGAIESATA.

A mitochondrion-targeting transit peptide spans 1–53 (MSVFRRSVQCVGVLPSILAQRSSLLARPANLQFLKTNSSKFVPQVTANVSRRM).

The protein belongs to the NifU family. Homodimer. Component of the core Fe-S cluster (ISC) assembly machinery. [2Fe-2S] cluster serves as cofactor.

It is found in the mitochondrion. The protein localises to the mitochondrion matrix. It functions in the pathway cofactor biosynthesis; iron-sulfur cluster biosynthesis. Functionally, scaffold protein for the de novo synthesis of iron-sulfur (Fe-S) clusters within mitochondria, which is required for maturation of both mitochondrial and cytoplasmic [2Fe-2S] and [4Fe-4S] proteins. First, a [2Fe-2S] cluster is transiently assembled on the scaffold protein isu1. In a second step, the cluster is released from isu1, transferred to a glutaredoxin, followed by the formation of mitochondrial [2Fe-2S] proteins, the synthesis of [4Fe-4S] clusters and their target-specific insertion into the recipient apoproteins. Cluster assembly on isu1 depends on the function of the cysteine desulfurase complex nfs1-isd11, which serves as the sulfur donor for cluster synthesis, the iron-binding protein frataxin as the putative iron donor, and the electron transfer chain comprised of ferredoxin reductase and ferredoxin, which receive their electrons from NADH. In Schizosaccharomyces pombe (strain 972 / ATCC 24843) (Fission yeast), this protein is Iron sulfur cluster assembly protein 1, mitochondrial (isu1).